Consider the following 58-residue polypeptide: Large ribosomal subunit protein uL30 (58 aa).

Belongs to the universal ribosomal protein uL30 family. In terms of assembly, part of the 50S ribosomal subunit.

The sequence is that of Large ribosomal subunit protein uL30 from Bacteroides fragilis (strain ATCC 25285 / DSM 2151 / CCUG 4856 / JCM 11019 / LMG 10263 / NCTC 9343 / Onslow / VPI 2553 / EN-2).